We begin with the raw amino-acid sequence, 346 residues long: NADH-ubiquinone oxidoreductase chain 2 (346 aa).

11 helical membrane-spanning segments follow: residues 3–23 (PLIL…VMAS), 25–45 (HWLM…PILM), 59–79 (YFLT…INLM), 96–116 (IIMT…FWVP), 122–142 (ISLT…MSIL), 149–169 (INLN…GWGG), 178–198 (IMAY…VYNP), 200–220 (LTML…MLFI), 237–257 (APLI…LPPL), 274–294 (SSII…YFYM), and 322–342 (ITLL…TPML).

It belongs to the complex I subunit 2 family. In terms of assembly, core subunit of respiratory chain NADH dehydrogenase (Complex I) which is composed of 45 different subunits. Interacts with TMEM242.

The protein resides in the mitochondrion inner membrane. The enzyme catalyses a ubiquinone + NADH + 5 H(+)(in) = a ubiquinol + NAD(+) + 4 H(+)(out). Functionally, core subunit of the mitochondrial membrane respiratory chain NADH dehydrogenase (Complex I) which catalyzes electron transfer from NADH through the respiratory chain, using ubiquinone as an electron acceptor. Essential for the catalytic activity and assembly of complex I. The polypeptide is NADH-ubiquinone oxidoreductase chain 2 (Equus asinus (Donkey)).